The following is a 365-amino-acid chain: tRNA/tmRNA (uracil-C(5))-methyltransferase (365 aa).

S-adenosyl-L-methionine is bound by residues glutamine 189, tyrosine 217, asparagine 222, glutamate 238, and aspartate 298. Residue cysteine 323 is the Nucleophile of the active site. The active-site Proton acceptor is glutamate 357.

This sequence belongs to the class I-like SAM-binding methyltransferase superfamily. RNA M5U methyltransferase family. TrmA subfamily.

It catalyses the reaction uridine(54) in tRNA + S-adenosyl-L-methionine = 5-methyluridine(54) in tRNA + S-adenosyl-L-homocysteine + H(+). It carries out the reaction uridine(341) in tmRNA + S-adenosyl-L-methionine = 5-methyluridine(341) in tmRNA + S-adenosyl-L-homocysteine + H(+). Dual-specificity methyltransferase that catalyzes the formation of 5-methyluridine at position 54 (m5U54) in all tRNAs, and that of position 341 (m5U341) in tmRNA (transfer-mRNA). The sequence is that of tRNA/tmRNA (uracil-C(5))-methyltransferase from Shewanella frigidimarina (strain NCIMB 400).